The primary structure comprises 357 residues: Prostaglandin E2 receptor EP2 subtype (357 aa).

Residues 1–24 are Extracellular-facing; the sequence is MDNSFNDSRRVENCESRQYLLSDE. N-linked (GlcNAc...) asparagine glycosylation occurs at Asn-6. Residues 25–48 form a helical membrane-spanning segment; that stretch reads SPAISSVMFTAGVLGNLIALALLA. Residues 49 to 66 lie on the Cytoplasmic side of the membrane; that stretch reads RRWRGDTGCSAGSRTSIS. A helical transmembrane segment spans residues 67 to 92; it reads LFHVLVTELVLTDLLGTCLISPVVLA. Topologically, residues 93–112 are extracellular; it reads SYSRNQTLVALAPESRACTY. Residues Cys-110 and Cys-188 are joined by a disulfide bond. Residues 113–133 form a helical membrane-spanning segment; sequence FAFTMTFFSLATMLMLFAMAL. Residues 134–152 are Cytoplasmic-facing; that stretch reads ERYLAIGHPYFYRRRVSRR. The chain crosses the membrane as a helical span at residues 153-177; it reads GGLAVLPAIYGVSLLFCSLPLLNYG. Topologically, residues 178–199 are extracellular; sequence EYVQYCPGTWCFIQHGRTAYLQ. A helical transmembrane segment spans residues 200–224; that stretch reads LYATVLLLLIVAVLGCNISVILNLI. The Cytoplasmic segment spans residues 225–262; it reads RMQLRSKRSRCGLSGSSLRGPGSRRRGERTSMAEETDH. A compositionally biased stretch (low complexity) spans 235–245; that stretch reads CGLSGSSLRGP. Residues 235–255 are disordered; the sequence is CGLSGSSLRGPGSRRRGERTS. The helical transmembrane segment at 263–286 threads the bilayer; that stretch reads LILLAIMTITFAVCSLPFTIFAYM. Residues 287-299 lie on the Extracellular side of the membrane; the sequence is DETSSRKEKWDLR. A helical transmembrane segment spans residues 300-323; that stretch reads ALRFLSVNSIIDPWVFVILRPPVL. Topologically, residues 324-357 are cytoplasmic; that stretch reads RLMRSVLCCRTSLRAPEAPGASCSTQQTDLCGQL.

It belongs to the G-protein coupled receptor 1 family.

The protein localises to the cell membrane. Its function is as follows. Receptor for prostaglandin E2 (PGE2). The activity of this receptor is mediated by G(s) proteins that stimulate adenylate cyclase. The subsequent raise in intracellular cAMP is responsible for the relaxing effect of this receptor on smooth muscle. The protein is Prostaglandin E2 receptor EP2 subtype (Ptger2) of Rattus norvegicus (Rat).